The primary structure comprises 809 residues: Glycerol-3-phosphate acyltransferase (809 aa).

The HXXXXD motif signature appears at 309 to 314 (HRSHMD).

It belongs to the GPAT/DAPAT family.

It localises to the cell inner membrane. The catalysed reaction is sn-glycerol 3-phosphate + an acyl-CoA = a 1-acyl-sn-glycero-3-phosphate + CoA. The protein operates within phospholipid metabolism; CDP-diacylglycerol biosynthesis; CDP-diacylglycerol from sn-glycerol 3-phosphate: step 1/3. The polypeptide is Glycerol-3-phosphate acyltransferase (Shewanella oneidensis (strain ATCC 700550 / JCM 31522 / CIP 106686 / LMG 19005 / NCIMB 14063 / MR-1)).